Reading from the N-terminus, the 356-residue chain is Golgi-resident adenosine 3',5'-bisphosphate 3'-phosphatase (356 aa).

Residue M1 is modified to N-acetylmethionine. Over 1–12 (MAPMGIRLSPLG) the chain is Cytoplasmic. The helical transmembrane segment at 13–33 (VAVFFLLGLGVLYHLYSGFLA) threads the bilayer. Residues 34–356 (GRFSLFGLGG…KLPDLEKSGH (323 aa)) lie on the Lumenal side of the membrane. The segment at 82–104 (VRESNVLHEKSKGKTREGAEDKM) is disordered. The Proton acceptor role is filled by D108. Mg(2+) contacts are provided by E131, D172, L174, and D175. Residue T177 is the Proton acceptor of the active site. Positions 240 and 243 each coordinate AMP. N-linked (GlcNAc...) asparagine glycosylation is present at N257. AMP is bound by residues G266 and K270. Position 298 (D298) interacts with Mg(2+).

This sequence belongs to the inositol monophosphatase superfamily. It depends on Mg(2+) as a cofactor. Post-translationally, contains N-linked glycan resistant to endoglycosydase H.

The protein localises to the golgi apparatus. Its subcellular location is the trans-Golgi network membrane. It carries out the reaction adenosine 3',5'-bisphosphate + H2O = AMP + phosphate. It functions in the pathway sulfur metabolism. Strongly inhibited by lithium. Exhibits 3'-nucleotidase activity toward adenosine 3',5'-bisphosphate (PAP), namely hydrolyzes adenosine 3',5'-bisphosphate into adenosine 5'-monophosphate (AMP) and a phosphate. May play a role in the formation of skeletal elements derived through endochondral ossification, possibly by clearing adenosine 3',5'-bisphosphate produced by Golgi sulfotransferases during glycosaminoglycan sulfation. Has no activity toward 3'-phosphoadenosine 5'-phosphosulfate (PAPS) or inositol phosphate (IP) substrates including I(1)P, I(1,4)P2, I(1,3,4)P3, I(1,4,5)P3 and I(1,3,4,5)P4. This Rattus norvegicus (Rat) protein is Golgi-resident adenosine 3',5'-bisphosphate 3'-phosphatase (Bpnt2).